Consider the following 257-residue polypeptide: 3-deoxy-manno-octulosonate cytidylyltransferase (257 aa).

Belongs to the KdsB family.

It is found in the cytoplasm. It carries out the reaction 3-deoxy-alpha-D-manno-oct-2-ulosonate + CTP = CMP-3-deoxy-beta-D-manno-octulosonate + diphosphate. It functions in the pathway nucleotide-sugar biosynthesis; CMP-3-deoxy-D-manno-octulosonate biosynthesis; CMP-3-deoxy-D-manno-octulosonate from 3-deoxy-D-manno-octulosonate and CTP: step 1/1. It participates in bacterial outer membrane biogenesis; lipopolysaccharide biosynthesis. Functionally, activates KDO (a required 8-carbon sugar) for incorporation into bacterial lipopolysaccharide in Gram-negative bacteria. The protein is 3-deoxy-manno-octulosonate cytidylyltransferase of Stenotrophomonas maltophilia (strain K279a).